We begin with the raw amino-acid sequence, 72 residues long: uncharacterized protein (72 aa).

This is an uncharacterized protein from Saccharomyces cerevisiae (strain ATCC 204508 / S288c) (Baker's yeast).